Here is a 1001-residue protein sequence, read N- to C-terminus: Kinesin-like protein KIN-14P (1001 aa).

The region spanning 53–172 (AIRRYEAANW…CVLSLRSFSE (120 aa)) is the Calponin-homology (CH) domain. Over residues 284–300 (NESVKHALDPNDDKLLS) the composition is skewed to basic and acidic residues. Residues 284-322 (NESVKHALDPNDDKLLSRADTPPEMESTCTCSTGNMDEE) are disordered. Positions 426–748 (NIRVYCRVRP…LKFAERVATV (323 aa)) constitute a Kinesin motor domain. 509–516 (GQTGSGKT) lines the ATP pocket. The stretch at 756 to 784 (NKEGGEVKELKEQIACLKAALAKKDGETE) forms a coiled coil. Disordered stretches follow at residues 804–830 (PPAF…QKKR) and 890–1001 (EPQW…SAKK). A compositionally biased stretch (polar residues) spans 972 to 984 (PSASTKNGKQLSL).

This sequence belongs to the TRAFAC class myosin-kinesin ATPase superfamily. Kinesin family. KIN-14 subfamily.

This is Kinesin-like protein KIN-14P from Oryza sativa subsp. japonica (Rice).